A 68-amino-acid chain; its full sequence is DNA-directed RNA polymerase subunit omega (68 aa).

The protein belongs to the RNA polymerase subunit omega family. As to quaternary structure, the RNAP catalytic core consists of 2 alpha, 1 beta, 1 beta' and 1 omega subunit. When a sigma factor is associated with the core the holoenzyme is formed, which can initiate transcription.

The enzyme catalyses RNA(n) + a ribonucleoside 5'-triphosphate = RNA(n+1) + diphosphate. Functionally, promotes RNA polymerase assembly. Latches the N- and C-terminal regions of the beta' subunit thereby facilitating its interaction with the beta and alpha subunits. This is DNA-directed RNA polymerase subunit omega from Neisseria meningitidis serogroup C (strain 053442).